Reading from the N-terminus, the 1366-residue chain is DNA-directed RNA polymerase subunit beta'' (1366 aa).

The Zn(2+) site is built by C220, C290, C297, and C300.

This sequence belongs to the RNA polymerase beta' chain family. RpoC2 subfamily. In plastids the minimal PEP RNA polymerase catalytic core is composed of four subunits: alpha, beta, beta', and beta''. When a (nuclear-encoded) sigma factor is associated with the core the holoenzyme is formed, which can initiate transcription. Requires Zn(2+) as cofactor.

It is found in the plastid. The protein resides in the chloroplast. It catalyses the reaction RNA(n) + a ribonucleoside 5'-triphosphate = RNA(n+1) + diphosphate. Functionally, DNA-dependent RNA polymerase catalyzes the transcription of DNA into RNA using the four ribonucleoside triphosphates as substrates. This chain is DNA-directed RNA polymerase subunit beta'', found in Lemna minor (Common duckweed).